The following is a 184-amino-acid chain: Envelope protein 169 (184 aa).

Residues Met1 to Lys6 are Intravirion-facing. The helical transmembrane segment at Met7–Ile27 threads the bilayer. Over Ser28–Leu184 the chain is Virion surface.

This sequence belongs to the asfivirus envelope protein p22 family.

The protein localises to the virion membrane. Its subcellular location is the host cell membrane. This chain is Envelope protein 169, found in Ornithodoros (relapsing fever ticks).